Consider the following 193-residue polypeptide: Probable oligoribonuclease (193 aa).

The region spanning 15 to 177 (IIWIDCEMTG…DDIMESIAEL (163 aa)) is the Exonuclease domain. Tyr-136 is a catalytic residue.

It belongs to the oligoribonuclease family.

Its function is as follows. 3'-to-5' exoribonuclease specific for small oligoribonucleotides. The protein is Probable oligoribonuclease of Caenorhabditis elegans.